A 589-amino-acid chain; its full sequence is Nicotinate phosphoribosyltransferase (589 aa).

The disordered stretch occupies residues 1–30 (MSQSNTPLKRKKTENGYSENGSTTGATSNQ). Residues 15–30 (NGYSENGSTTGATSNQ) show a composition bias toward polar residues. The nicotinate site is built by Tyr68 and Thr256. Residue His259 is modified to Phosphohistidine. Arg356 serves as a coordination point for nicotinate. Thr418 provides a ligand contact to 5-phospho-alpha-D-ribose 1-diphosphate.

This sequence belongs to the NAPRTase family. It depends on Mg(2+) as a cofactor. Mn(2+) serves as cofactor. In terms of processing, transiently phosphorylated on a His residue during the reaction cycle. Phosphorylation strongly increases the affinity for substrates and increases the rate of nicotinate D-ribonucleotide production. Dephosphorylation regenerates the low-affinity form of the enzyme, leading to product release.

It carries out the reaction nicotinate + 5-phospho-alpha-D-ribose 1-diphosphate + ATP + H2O = nicotinate beta-D-ribonucleotide + ADP + phosphate + diphosphate. It participates in cofactor biosynthesis; NAD(+) biosynthesis; nicotinate D-ribonucleotide from nicotinate: step 1/1. Catalyzes the first step in the biosynthesis of NAD from nicotinic acid, the ATP-dependent synthesis of beta-nicotinate D-ribonucleotide from nicotinate and 5-phospho-D-ribose 1-phosphate. Helps prevent cellular oxidative stress via its role in NAD biosynthesis. The sequence is that of Nicotinate phosphoribosyltransferase (naprt) from Dictyostelium discoideum (Social amoeba).